The following is a 346-amino-acid chain: Glucose-6-phosphatase 3 (346 aa).

Topologically, residues 1-24 are lumenal; the sequence is MESTLGAGIVIAEALQNQLAWLEN. The helical transmembrane segment at 25 to 45 threads the bilayer; that stretch reads VWLWITFLGDPKILFLFYFPA. Over 46-54 the chain is Cytoplasmic; it reads AYYASRRVG. The chain crosses the membrane as a helical span at residues 55–75; it reads IAVLWISLITEWLNLIFKWFL. Topologically, residues 76–114 are lumenal; that stretch reads FGDRPFWWVHESGYYSQAPAQVHQFPSSCETGPGSPSGH. Arginine 79 lines the substrate pocket. The active-site Proton donor is the histidine 114. Residues 115–135 form a helical membrane-spanning segment; that stretch reads CMITGAALWPIMTALSSQVAT. Residues 136–146 lie on the Cytoplasmic side of the membrane; sequence RARSRWVRVMP. The chain crosses the membrane as a helical span at residues 147–164; it reads SLAYCTFLLAVGLSRIFI. Arginine 161 serves as a coordination point for substrate. The Lumenal portion of the chain corresponds to 165-169; the sequence is LAHFP. Residue histidine 167 is the Nucleophile of the active site. The helical transmembrane segment at 170–186 threads the bilayer; the sequence is HQVLAGLITGAVLGWLM. Residues 187 to 197 lie on the Cytoplasmic side of the membrane; the sequence is TPRVPMERELS. The chain crosses the membrane as a helical span at residues 198–218; that stretch reads FYGLTALALMLGTSLIYWTLF. Residues 219–254 are Lumenal-facing; that stretch reads TLGLDLSWSISLAFKWCERPEWIHVDSRPFASLSRD. Residues 255–273 traverse the membrane as a helical segment; the sequence is SGAALGLGIALHSPCYAQV. At 274 to 283 the chain is on the cytoplasmic side; sequence RRAQLGNGQK. The chain crosses the membrane as a helical span at residues 284 to 304; the sequence is IACLVLAMGLLGPLDWLGHPP. Over 305 to 307 the chain is Lumenal; it reads QIS. The chain crosses the membrane as a helical span at residues 308-328; it reads LFYIFNFLKYTLWPCLVLALV. Residues 329 to 346 lie on the Cytoplasmic side of the membrane; that stretch reads PWAVHMFSAQEAPPIHSS.

Belongs to the glucose-6-phosphatase family. Ubiquitously expressed. Highly expressed in skeletal muscle, at intermediate levels in heart, brain, placenta, kidney, colon, thymus, spleen and pancreas. Also detected in testis, prostate, ovary, liver, lung, small intestine and peripheral blood lymphocytes.

The protein localises to the endoplasmic reticulum membrane. The enzyme catalyses D-glucose 6-phosphate + H2O = D-glucose + phosphate. It participates in carbohydrate biosynthesis; gluconeogenesis. Its activity is regulated as follows. Inhibited by vanadate. Its function is as follows. Hydrolyzes glucose-6-phosphate to glucose in the endoplasmic reticulum. May form with the glucose-6-phosphate transporter (SLC37A4/G6PT) a ubiquitously expressed complex responsible for glucose production through glycogenolysis and gluconeogenesis. Probably required for normal neutrophil function. This is Glucose-6-phosphatase 3 (G6PC3) from Homo sapiens (Human).